We begin with the raw amino-acid sequence, 579 residues long: V-type ATP synthase alpha chain (579 aa).

An ATP-binding site is contributed by 227-234 (GGFGTGKT).

The protein belongs to the ATPase alpha/beta chains family.

It carries out the reaction ATP + H2O + 4 H(+)(in) = ADP + phosphate + 5 H(+)(out). Produces ATP from ADP in the presence of a proton gradient across the membrane. The V-type alpha chain is a catalytic subunit. In Anaeromyxobacter sp. (strain K), this protein is V-type ATP synthase alpha chain.